Reading from the N-terminus, the 553-residue chain is Arginine--tRNA ligase (553 aa).

Positions 123 to 133 (ANPTGPLTIGR) match the 'HIGH' region motif.

The protein belongs to the class-I aminoacyl-tRNA synthetase family. Monomer.

The protein localises to the cytoplasm. The catalysed reaction is tRNA(Arg) + L-arginine + ATP = L-arginyl-tRNA(Arg) + AMP + diphosphate. This chain is Arginine--tRNA ligase, found in Chlorobium phaeobacteroides (strain BS1).